A 273-amino-acid polypeptide reads, in one-letter code: 4-hydroxy-tetrahydrodipicolinate reductase (273 aa).

NAD(+)-binding positions include G12–M17 and E38. R39 is a binding site for NADP(+). NAD(+)-binding positions include G102 to T104 and A126 to F129. The Proton donor/acceptor role is filled by H159. Position 160 (H160) interacts with (S)-2,3,4,5-tetrahydrodipicolinate. Catalysis depends on K163, which acts as the Proton donor. (S)-2,3,4,5-tetrahydrodipicolinate is bound at residue G169 to T170.

It belongs to the DapB family. Homotetramer.

Its subcellular location is the cytoplasm. It catalyses the reaction (S)-2,3,4,5-tetrahydrodipicolinate + NAD(+) + H2O = (2S,4S)-4-hydroxy-2,3,4,5-tetrahydrodipicolinate + NADH + H(+). It carries out the reaction (S)-2,3,4,5-tetrahydrodipicolinate + NADP(+) + H2O = (2S,4S)-4-hydroxy-2,3,4,5-tetrahydrodipicolinate + NADPH + H(+). The protein operates within amino-acid biosynthesis; L-lysine biosynthesis via DAP pathway; (S)-tetrahydrodipicolinate from L-aspartate: step 4/4. Functionally, catalyzes the conversion of 4-hydroxy-tetrahydrodipicolinate (HTPA) to tetrahydrodipicolinate. This Salmonella dublin (strain CT_02021853) protein is 4-hydroxy-tetrahydrodipicolinate reductase.